The following is a 76-amino-acid chain: MAETDPKTVQDLTSVVQTLLQQMQDKFQTMSDQIIGRIDDMSSRIDDLEKNIADLMTQAGVEELEGENKIPATQKS.

The protein belongs to the HSBP1 family. As to quaternary structure, homohexamer. Associates with heptad repeats of HSF1 trimers and probably also HSF1 monomers, and with HSP70. Association with HSF1 trimers and HSP70 coincides with attenuation of heat shock response and the conversion of HSF1 trimer to monomer.

It is found in the nucleus. Its function is as follows. Negative regulator of the heat shock response. Negatively affects HSF1 DNA-binding activity. May have a role in the suppression of the activation of the stress response during the aging process. This chain is Heat shock factor-binding protein 1 (HSBP1), found in Pongo abelii (Sumatran orangutan).